Consider the following 90-residue polypeptide: DNA-binding protein HU (90 aa).

The protein belongs to the bacterial histone-like protein family. In terms of assembly, homodimer.

Histone-like DNA-binding protein which is capable of wrapping DNA to stabilize it, and thus to prevent its denaturation under extreme environmental conditions. The polypeptide is DNA-binding protein HU (hup) (Staphylococcus aureus (strain COL)).